A 147-amino-acid chain; its full sequence is Lysozyme C-1 (147 aa).

The first 18 residues, 1–18 (MKALLTLVFCLLPLAAQG), serve as a signal peptide directing secretion. A C-type lysozyme domain is found at 19–147 (KVYSRCELAA…VSKWIRGCRL (129 aa)). 4 disulfides stabilise this stretch: C24–C145, C48–C133, C82–C98, and C94–C112. Residues E53 and D70 contribute to the active site.

The protein belongs to the glycosyl hydrolase 22 family.

It localises to the secreted. The enzyme catalyses Hydrolysis of (1-&gt;4)-beta-linkages between N-acetylmuramic acid and N-acetyl-D-glucosamine residues in a peptidoglycan and between N-acetyl-D-glucosamine residues in chitodextrins.. Lysozymes have primarily a bacteriolytic function; those in tissues and body fluids are associated with the monocyte-macrophage system and enhance the activity of immunoagents. The protein is Lysozyme C-1 of Anas platyrhynchos (Mallard).